Consider the following 404-residue polypeptide: Phosphopentomutase (404 aa).

Positions 10, 303, 308, 344, 345, and 356 each coordinate Mn(2+).

It belongs to the phosphopentomutase family. Requires Mn(2+) as cofactor.

Its subcellular location is the cytoplasm. The catalysed reaction is 2-deoxy-alpha-D-ribose 1-phosphate = 2-deoxy-D-ribose 5-phosphate. The enzyme catalyses alpha-D-ribose 1-phosphate = D-ribose 5-phosphate. Its pathway is carbohydrate degradation; 2-deoxy-D-ribose 1-phosphate degradation; D-glyceraldehyde 3-phosphate and acetaldehyde from 2-deoxy-alpha-D-ribose 1-phosphate: step 1/2. Its function is as follows. Isomerase that catalyzes the conversion of deoxy-ribose 1-phosphate (dRib-1-P) and ribose 1-phosphate (Rib-1-P) to deoxy-ribose 5-phosphate (dRib-5-P) and ribose 5-phosphate (Rib-5-P), respectively. This Shewanella putrefaciens (strain CN-32 / ATCC BAA-453) protein is Phosphopentomutase.